A 778-amino-acid chain; its full sequence is Aconitate hydratase, mitochondrial (778 aa).

The transit peptide at Met1–Leu16 directs the protein to the mitochondrion. Substrate-binding positions include Gln95 and Asp188–His190. Cys382 provides a ligand contact to [4Fe-4S] cluster. Ser391 carries the post-translational modification Phosphoserine. At Thr409 the chain carries Phosphothreonine. [4Fe-4S] cluster is bound by residues Cys445 and Cys448. Substrate-binding residues include Arg471 and Arg476. A Phosphoserine modification is found at Ser556. Substrate is bound by residues Arg604 and Ser667–Arg668.

Belongs to the aconitase/IPM isomerase family. As to quaternary structure, monomer. Binds to mitochondrial DNA (mtDNA) and identified as component of mitochondrial nucleoids. The cofactor is [4Fe-4S] cluster.

It is found in the mitochondrion. It localises to the cytoplasm. The catalysed reaction is citrate = D-threo-isocitrate. It participates in carbohydrate metabolism; tricarboxylic acid cycle; isocitrate from oxaloacetate: step 2/2. With respect to regulation, subject to catabolite regulation. Catalyzes the isomerization of citrate to isocitrate via cis-aconitate, a step in the citric acid cycle. Can also provide minor contributions to the reversible dehydration of (R)-homocitrate to cis-homoaconitate, a step in the alpha-aminoadipate pathway for lysine biosynthesis. Also plays an essential role in mtDNA maintenance. May directly protect mtDNA from accumulation of point mutations and ssDNA breaks as a component of mitochondrial nucleoids, or by preventing accumulation of iron citrate thereby alleviating its detrimental effects in mitochondria. This chain is Aconitate hydratase, mitochondrial, found in Saccharomyces cerevisiae (strain ATCC 204508 / S288c) (Baker's yeast).